A 338-amino-acid chain; its full sequence is Tetraacyldisaccharide 4'-kinase (338 aa).

67–74 (IAGGAGKT) provides a ligand contact to ATP.

The protein belongs to the LpxK family.

The enzyme catalyses a lipid A disaccharide + ATP = a lipid IVA + ADP + H(+). The protein operates within glycolipid biosynthesis; lipid IV(A) biosynthesis; lipid IV(A) from (3R)-3-hydroxytetradecanoyl-[acyl-carrier-protein] and UDP-N-acetyl-alpha-D-glucosamine: step 6/6. In terms of biological role, transfers the gamma-phosphate of ATP to the 4'-position of a tetraacyldisaccharide 1-phosphate intermediate (termed DS-1-P) to form tetraacyldisaccharide 1,4'-bis-phosphate (lipid IVA). The sequence is that of Tetraacyldisaccharide 4'-kinase from Acidovorax ebreus (strain TPSY) (Diaphorobacter sp. (strain TPSY)).